The following is a 164-amino-acid chain: Lipoprotein signal peptidase (164 aa).

The next 3 membrane-spanning stretches (helical) occupy residues 12 to 32, 70 to 90, and 102 to 122; these read WLWL…LILQ, WFFA…MYRS, and ALII…GFVV. Active-site residues include Asp-123 and Asp-141. Residues 137–157 traverse the membrane as a helical segment; it reads FNLADTAICVGAALIVLEGFL.

The protein belongs to the peptidase A8 family.

Its subcellular location is the cell inner membrane. It carries out the reaction Release of signal peptides from bacterial membrane prolipoproteins. Hydrolyzes -Xaa-Yaa-Zaa-|-(S,diacylglyceryl)Cys-, in which Xaa is hydrophobic (preferably Leu), and Yaa (Ala or Ser) and Zaa (Gly or Ala) have small, neutral side chains.. Its pathway is protein modification; lipoprotein biosynthesis (signal peptide cleavage). In terms of biological role, this protein specifically catalyzes the removal of signal peptides from prolipoproteins. In Escherichia coli O157:H7, this protein is Lipoprotein signal peptidase.